The sequence spans 442 residues: GTPase Der (442 aa).

EngA-type G domains are found at residues arginine 2–asparagine 167 and phenylalanine 175–methionine 351. GTP contacts are provided by residues glycine 8–serine 15, aspartate 55–isoleucine 59, asparagine 119–glutamate 122, glycine 181–serine 188, aspartate 228–valine 232, and asparagine 293–aspartate 296. The region spanning arginine 352 to asparagine 436 is the KH-like domain.

This sequence belongs to the TRAFAC class TrmE-Era-EngA-EngB-Septin-like GTPase superfamily. EngA (Der) GTPase family. As to quaternary structure, associates with the 50S ribosomal subunit.

Its function is as follows. GTPase that plays an essential role in the late steps of ribosome biogenesis. The protein is GTPase Der of Ureaplasma urealyticum serovar 10 (strain ATCC 33699 / Western).